Here is a 626-residue protein sequence, read N- to C-terminus: 4-hydroxy-3-methylbut-2-en-1-yl diphosphate synthase (flavodoxin) (626 aa).

[4Fe-4S] cluster is bound by residues Cys-521, Cys-524, Cys-555, and Glu-562.

It belongs to the IspG family. The cofactor is [4Fe-4S] cluster.

The catalysed reaction is (2E)-4-hydroxy-3-methylbut-2-enyl diphosphate + oxidized [flavodoxin] + H2O + 2 H(+) = 2-C-methyl-D-erythritol 2,4-cyclic diphosphate + reduced [flavodoxin]. It participates in isoprenoid biosynthesis; isopentenyl diphosphate biosynthesis via DXP pathway; isopentenyl diphosphate from 1-deoxy-D-xylulose 5-phosphate: step 5/6. Functionally, converts 2C-methyl-D-erythritol 2,4-cyclodiphosphate (ME-2,4cPP) into 1-hydroxy-2-methyl-2-(E)-butenyl 4-diphosphate. The polypeptide is 4-hydroxy-3-methylbut-2-en-1-yl diphosphate synthase (flavodoxin) (Bacteroides fragilis (strain ATCC 25285 / DSM 2151 / CCUG 4856 / JCM 11019 / LMG 10263 / NCTC 9343 / Onslow / VPI 2553 / EN-2)).